We begin with the raw amino-acid sequence, 578 residues long: Protein O-linked-mannose beta-1,4-N-acetylglucosaminyltransferase 2 (578 aa).

At 1-4 (MNIS) the chain is on the cytoplasmic side. Residues 5–25 (AVFSALLVSIMAAVLWKHVKL) traverse the membrane as a helical; Signal-anchor for type II membrane protein segment. Residues 26–578 (LDQFYVIEEE…PFAEVLVCST (553 aa)) lie on the Lumenal side of the membrane. 6 N-linked (GlcNAc...) asparagine glycosylation sites follow: Asn98, Asn275, Asn335, Asn451, Asn541, and Asn563. Positions 484–578 (RESKCQASAQ…PFAEVLVCST (95 aa)) constitute a Fibronectin type-III domain.

The protein belongs to the glycosyltransferase 61 family.

It is found in the endoplasmic reticulum membrane. It carries out the reaction 3-O-(alpha-D-mannosyl)-L-threonyl-[protein] + UDP-N-acetyl-alpha-D-glucosamine = 3-O-(N-acetyl-beta-D-glucosaminyl-(1-&gt;4)-alpha-D-mannosyl)-L-threonyl-[protein] + UDP + H(+). It participates in protein modification; protein glycosylation. Its function is as follows. O-linked mannose beta-1,4-N-acetylglucosaminyltransferase that transfers UDP-N-acetyl-D-glucosamine to the 4-position of the mannose to generate N-acetyl-D-glucosamine-beta-1,4-O-D-mannosylprotein. Involved in the biosynthesis of the phosphorylated O-mannosyl trisaccharide (N-acetylgalactosamine-beta-3-N-acetylglucosamine-beta-4-(phosphate-6-)mannose), a carbohydrate structure present in alpha-dystroglycan (DAG1), which is required for binding laminin G-like domain-containing extracellular proteins with high affinity. This is Protein O-linked-mannose beta-1,4-N-acetylglucosaminyltransferase 2 (pomgnt2) from Xenopus laevis (African clawed frog).